The chain runs to 237 residues: Phosphoribosylaminoimidazole-succinocarboxamide synthase (237 aa).

The protein belongs to the SAICAR synthetase family.

It carries out the reaction 5-amino-1-(5-phospho-D-ribosyl)imidazole-4-carboxylate + L-aspartate + ATP = (2S)-2-[5-amino-1-(5-phospho-beta-D-ribosyl)imidazole-4-carboxamido]succinate + ADP + phosphate + 2 H(+). The protein operates within purine metabolism; IMP biosynthesis via de novo pathway; 5-amino-1-(5-phospho-D-ribosyl)imidazole-4-carboxamide from 5-amino-1-(5-phospho-D-ribosyl)imidazole-4-carboxylate: step 1/2. This chain is Phosphoribosylaminoimidazole-succinocarboxamide synthase, found in Shigella dysenteriae serotype 1 (strain Sd197).